The chain runs to 248 residues: MTERLAGKTALVTGAAQGIGKAIAARLAADGATVIVSDINAEGAKAAAASIGKKARAIAADISDPGSVKALFAEIQALTGGIDILVNNASIVPFVAWDDVDLDHWRKIIDVNLTGTFIVTRAGTDQMRAAGKAGRVISIASNTFFAGTPNMAAYVAAKGGVIGFTRALATELGKYNITANAVTPGLIESDGVKASPHNEAFGFVEMLQAMKGKGQPEHIADVVSFLASDDARWITGQTLNVDAGMVRH.

An NAD(+)-binding site is contributed by 11–35 (LVTGAAQGIGKAIAARLAADGATVI). Ser-141 contacts substrate. The Proton acceptor role is filled by Tyr-154.

Belongs to the short-chain dehydrogenases/reductases (SDR) family. As to quaternary structure, homotetramer.

The enzyme catalyses pyridoxal + NAD(+) = 4-pyridoxolactone + NADH + H(+). The protein operates within cofactor degradation; B6 vitamer degradation; 4-pyridoxate from pyridoxal: step 1/2. Functionally, involved in the degradation of pyridoxine or pyridoxamine (free, phosphate-unbound, forms of vitamin B6). Oxidizes pyridoxal to 4-pyridoxolactone, but does not have activity toward pyridoxal 5'-phosphate, pyridoxine, pyridoxamine, pyridoxamine 5'-phosphate, 4-phthalaldehyde, 2-nitrobenzaldehyde, pyridine, formaldehyde, 2-carboxybenzaldehyde or sugars. This Mesorhizobium japonicum (strain LMG 29417 / CECT 9101 / MAFF 303099) (Mesorhizobium loti (strain MAFF 303099)) protein is Pyridoxal 4-dehydrogenase.